Here is a 119-residue protein sequence, read N- to C-terminus: NADH-quinone oxidoreductase subunit A (119 aa).

3 helical membrane-spanning segments follow: residues 9–29 (VLLF…LGYV), 63–83 (LVAI…PWAV), and 88–108 (VGGA…VGFV).

This sequence belongs to the complex I subunit 3 family. NDH-1 is composed of 14 different subunits. Subunits NuoA, H, J, K, L, M, N constitute the membrane sector of the complex.

It localises to the cell inner membrane. The enzyme catalyses a quinone + NADH + 5 H(+)(in) = a quinol + NAD(+) + 4 H(+)(out). Functionally, NDH-1 shuttles electrons from NADH, via FMN and iron-sulfur (Fe-S) centers, to quinones in the respiratory chain. The immediate electron acceptor for the enzyme in this species is believed to be ubiquinone. Couples the redox reaction to proton translocation (for every two electrons transferred, four hydrogen ions are translocated across the cytoplasmic membrane), and thus conserves the redox energy in a proton gradient. The polypeptide is NADH-quinone oxidoreductase subunit A (Delftia acidovorans (strain DSM 14801 / SPH-1)).